Consider the following 390-residue polypeptide: Isoaspartyl dipeptidase (390 aa).

2 residues coordinate Zn(2+): His68 and His70. Substrate-binding positions include 75–77, Thr106, and Tyr137; that span reads GGE. Lys162 provides a ligand contact to Zn(2+). Lys162 bears the N6-carboxylysine mark. Position 169 (Arg169) interacts with substrate. Residues His201 and His230 each contribute to the Zn(2+) site. Substrate is bound at residue Arg233. Asp285 serves as a coordination point for Zn(2+). The active-site Proton acceptor is the Asp285. Residue Ser289 participates in substrate binding.

The protein belongs to the peptidase M38 family. Zn(2+) is required as a cofactor. Co(2+) serves as cofactor. Post-translationally, carboxylation allows a single lysine to coordinate two zinc ions.

The protein resides in the cytoplasm. Its activity is regulated as follows. P-hydroxymercuribenzoate causes a slight inhibition (8 to 17 %). Iodoacetamide, o-iodosobenzoate and ammonium persulfate do not inhibit the enzyme activity. In terms of biological role, catalyzes the hydrolytic cleavage of a subset of L-isoaspartyl (L-beta-aspartyl) dipeptides. Used to degrade proteins damaged by L-isoaspartyl residues formation. The best substrate for the enzyme reported thus far is iso-Asp-Leu. The chain is Isoaspartyl dipeptidase (iadA) from Escherichia coli (strain K12).